The sequence spans 153 residues: Ribonuclease H (153 aa).

The 142-residue stretch at 4–145 (SVDSVELFTD…ADQLANRGVD (142 aa)) folds into the RNase H type-1 domain. Positions 13, 51, 73, and 137 each coordinate Mg(2+).

Belongs to the RNase H family. As to quaternary structure, monomer. It depends on Mg(2+) as a cofactor.

It localises to the cytoplasm. It carries out the reaction Endonucleolytic cleavage to 5'-phosphomonoester.. Endonuclease that specifically degrades the RNA of RNA-DNA hybrids. The polypeptide is Ribonuclease H (Pseudomonas fluorescens (strain Pf0-1)).